Reading from the N-terminus, the 65-residue chain is Large ribosomal subunit protein bL35 (65 aa).

A disordered region spans residues 1–40; sequence MPKMKTNSGSKKRFALTGTGKIKRKHAFHSHILTKKSKKR. Positions 21–40 are enriched in basic residues; sequence KIKRKHAFHSHILTKKSKKR.

This sequence belongs to the bacterial ribosomal protein bL35 family.

This Bacteroides fragilis (strain ATCC 25285 / DSM 2151 / CCUG 4856 / JCM 11019 / LMG 10263 / NCTC 9343 / Onslow / VPI 2553 / EN-2) protein is Large ribosomal subunit protein bL35.